A 432-amino-acid chain; its full sequence is MEVTVIGAGLAGSEAAWQLAKRGIRVKLYEMRPVKQTPAHHTDKFAELVCSNSLRANTLTNAVGVLKEEMRRLDSVIMKAADSCSVPAGGALAVDRHEFAAKVTQMVTNHPNVTVVREEVTSIPTGPTIIATGPLTSQPLSEQLQALTGEEYLYFYDAAAPIVEKESIDMEKVYIKSRYDKGEAAYINCPMTEEEFERFYDALISAETVPLKEFEKEIYFEGCMPIEVMARRGKKTLLFGPMKPVGLEDPRTGKRPFAVVQLRQDDAAGTLYNIVGFQTHLKWGAQKEVIRFIPGLEQAEIVRYGVMHRNTFINSPKLLKPTYQYKEREDLFFAGQMTGVEGYVESAASGLVAGINAAHYVLGKELVVFPQETAIGSMAHYITSANPKHFQPMNANFGLFAPLDEMIKDKKKKNERYAERALETIQNFLKKL.

Residue 7 to 12 (GAGLAG) participates in FAD binding.

It belongs to the MnmG family. TrmFO subfamily. FAD serves as cofactor.

The protein resides in the cytoplasm. It carries out the reaction uridine(54) in tRNA + (6R)-5,10-methylene-5,6,7,8-tetrahydrofolate + NADH + H(+) = 5-methyluridine(54) in tRNA + (6S)-5,6,7,8-tetrahydrofolate + NAD(+). The enzyme catalyses uridine(54) in tRNA + (6R)-5,10-methylene-5,6,7,8-tetrahydrofolate + NADPH + H(+) = 5-methyluridine(54) in tRNA + (6S)-5,6,7,8-tetrahydrofolate + NADP(+). Catalyzes the folate-dependent formation of 5-methyl-uridine at position 54 (M-5-U54) in all tRNAs. This chain is Methylenetetrahydrofolate--tRNA-(uracil-5-)-methyltransferase TrmFO, found in Anoxybacillus flavithermus (strain DSM 21510 / WK1).